A 70-amino-acid chain; its full sequence is Beta-defensin 107A (70 aa).

Positions 1 to 26 are cleaved as a signal peptide; it reads MPGAMKIFFFIFAALILLAQIFQART. Intrachain disulfides connect Cys-41-Cys-55 and Cys-45-Cys-64.

It belongs to the beta-defensin family.

It is found in the secreted. Has antibacterial activity. In Pan troglodytes (Chimpanzee), this protein is Beta-defensin 107A (DEFB107A).